The chain runs to 364 residues: Dermonecrotic toxin SPH (364 aa).

An N-terminal signal peptide occupies residues 1-17 (MIRIFALITALAITVKC). Catalysis depends on His-29, which acts as the Nucleophile. Mg(2+)-binding residues include Glu-49 and Asp-51. His-65 is a catalytic residue. Intrachain disulfides connect Cys-69-Cys-75 and Cys-71-Cys-215. Position 109 (Asp-109) interacts with Mg(2+).

The protein belongs to the arthropod phospholipase D family. Mg(2+) is required as a cofactor. In terms of tissue distribution, expressed in salivary glands.

The protein resides in the secreted. The catalysed reaction is an N-(acyl)-sphingosylphosphocholine = an N-(acyl)-sphingosyl-1,3-cyclic phosphate + choline. It catalyses the reaction an N-(acyl)-sphingosylphosphoethanolamine = an N-(acyl)-sphingosyl-1,3-cyclic phosphate + ethanolamine. The enzyme catalyses a 1-acyl-sn-glycero-3-phosphocholine = a 1-acyl-sn-glycero-2,3-cyclic phosphate + choline. It carries out the reaction a 1-acyl-sn-glycero-3-phosphoethanolamine = a 1-acyl-sn-glycero-2,3-cyclic phosphate + ethanolamine. In terms of biological role, dermonecrotic toxins cleave the phosphodiester linkage between the phosphate and headgroup of certain phospholipids (sphingolipid and lysolipid substrates), forming an alcohol (often choline) and a cyclic phosphate. Acts on sphingomyelin (SM). It may also act on ceramide phosphoethanolamine (CPE), lysophosphatidylcholine (LPC) and lysophosphatidylethanolamine (LPE), but not on lysophosphatidylserine (LPS), and lysophosphatidylglycerol (LPG). It acts by transphosphatidylation, releasing exclusively cyclic phosphate products as second products. Induces dermonecrosis, hemolysis, increased vascular permeability, edema, inflammatory response, and platelet aggregation. The protein is Dermonecrotic toxin SPH (SPH) of Ixodes scapularis (Black-legged tick).